A 285-amino-acid polypeptide reads, in one-letter code: Pantothenate synthetase (285 aa).

Position 30 to 37 (30 to 37 (MGFLHEGH)) interacts with ATP. Histidine 37 functions as the Proton donor in the catalytic mechanism. Glutamine 61 contributes to the (R)-pantoate binding site. Glutamine 61 contacts beta-alanine. Position 147–150 (147–150 (GQKD)) interacts with ATP. Residue glutamine 153 coordinates (R)-pantoate. ATP contacts are provided by residues valine 176 and 184-187 (KSSR).

It belongs to the pantothenate synthetase family. In terms of assembly, homodimer.

The protein resides in the cytoplasm. It catalyses the reaction (R)-pantoate + beta-alanine + ATP = (R)-pantothenate + AMP + diphosphate + H(+). It functions in the pathway cofactor biosynthesis; (R)-pantothenate biosynthesis; (R)-pantothenate from (R)-pantoate and beta-alanine: step 1/1. In terms of biological role, catalyzes the condensation of pantoate with beta-alanine in an ATP-dependent reaction via a pantoyl-adenylate intermediate. The polypeptide is Pantothenate synthetase (Listeria innocua serovar 6a (strain ATCC BAA-680 / CLIP 11262)).